The following is a 95-amino-acid chain: UPF0235 protein PTH_1821 (95 aa).

The protein belongs to the UPF0235 family.

The protein is UPF0235 protein PTH_1821 of Pelotomaculum thermopropionicum (strain DSM 13744 / JCM 10971 / SI).